Consider the following 369-residue polypeptide: Serine/threonine-protein acetyltransferase HopZ1a (369 aa).

Positions 1–46 (MGNVCVGGSRMSHQVYSPDRADTPPRSERNTPDRRQRAAGDAERTQ) are disordered. Positions 19–46 (DRADTPPRSERNTPDRRQRAAGDAERTQ) are enriched in basic and acidic residues. 1D-myo-inositol hexakisphosphate contacts are provided by arginine 49, lysine 53, and arginine 106. Active-site residues include histidine 150 and glutamate 170. Position 150 (histidine 150) interacts with CoA. CoA-binding positions include alanine 177 and 211–212 (KT). The active site involves cysteine 216. 1D-myo-inositol hexakisphosphate-binding positions include asparagine 222, 226–229 (KAHK), and 289–290 (KH). Lysine 289 carries the N6-acetyllysine; by autocatalysis modification. Position 292 to 295 (292 to 295 (ASLT)) interacts with CoA. Residues 314–317 (SEGH) and arginine 326 each bind 1D-myo-inositol hexakisphosphate. CoA-binding positions include 331 to 334 (RVKR) and 344 to 348 (SNTQF). Positions 358 and 362 each coordinate 1D-myo-inositol hexakisphosphate.

Belongs to the acetyltransferase YopJ family. As to quaternary structure, interacts with host plant JAZ proteins (e.g. Glycine max JAZ1 and Arabidospis thaliana TIFY10B/JAZ2, TIFY11A/JAZ5, TIFY11B/JAZ6, TIFY5A/JAZ8 and TIFY3B/JAZ12) and triggers their degradation. Binds directly to SZE1 and SZE2 at the host plasma membrane; this interaction with a complex made of, at least, SZE1, BKN2/SZE2, ZAR1 and ZED1 triggers host immunity. The cofactor is 1D-myo-inositol hexakisphosphate. Autoacetylated at Lys-289; while autoacetylation at Lys-289 is required for virulence function to some extent, it is not essential.

Its subcellular location is the secreted. The protein localises to the host cell membrane. It is found in the host cytoplasm. It localises to the host cytoskeleton. The protein resides in the host nucleus. The catalysed reaction is L-threonyl-[protein] + acetyl-CoA = O-acetyl-L-threonyl-[protein] + CoA. It carries out the reaction L-seryl-[protein] + acetyl-CoA = O-acetyl-L-seryl-[protein] + CoA. The enzyme catalyses L-lysyl-[protein] + acetyl-CoA = N(6)-acetyl-L-lysyl-[protein] + CoA + H(+). Its activity is regulated as follows. 1D-myo-inositol hexakisphosphate activates protein-acetyltransferase activity via an allosteric mechanism: 1D-myo-inositol hexakisphosphate-binding induces a conformational rearrangement that stimulates the interaction with acetyl-CoA. Acetyltransferase activity is activated by phytic acid. Serine/threonine-protein acetyltransferase translocated into infected cells, which impairs host microtubule network and host immunity by mediating acetylation of target proteins. Blocks secretion in host cells by mediating acetylation of host tubulin, thereby impairing host microbubule network. Impairs host cell immunity by mediating acetylation of host TIFY/JAZ transcription repressors (Arabidopsis thaliana TIFY10B/JAZ2, TIFY11A/JAZ5, TIFY11B/JAZ6, TIFY5A/JAZ8, TIFY9/JAZ10 and TIFY3B/JAZ12), thereby activating host jasmonate signaling. This chain is Serine/threonine-protein acetyltransferase HopZ1a, found in Pseudomonas syringae pv. syringae.